Consider the following 109-residue polypeptide: Phosphoribosyl-AMP cyclohydrolase (109 aa).

Asp-76 lines the Mg(2+) pocket. Cys-77 lines the Zn(2+) pocket. Asp-78 and Asp-80 together coordinate Mg(2+). 2 residues coordinate Zn(2+): Cys-93 and Cys-100.

It belongs to the PRA-CH family. Homodimer. Requires Mg(2+) as cofactor. Zn(2+) is required as a cofactor.

It is found in the cytoplasm. The enzyme catalyses 1-(5-phospho-beta-D-ribosyl)-5'-AMP + H2O = 1-(5-phospho-beta-D-ribosyl)-5-[(5-phospho-beta-D-ribosylamino)methylideneamino]imidazole-4-carboxamide. It participates in amino-acid biosynthesis; L-histidine biosynthesis; L-histidine from 5-phospho-alpha-D-ribose 1-diphosphate: step 3/9. Catalyzes the hydrolysis of the adenine ring of phosphoribosyl-AMP. This is Phosphoribosyl-AMP cyclohydrolase from Streptococcus mutans serotype c (strain ATCC 700610 / UA159).